The chain runs to 1407 residues: DNA-directed RNA polymerase subunit beta' (1407 aa).

Positions 70, 72, 85, and 88 each coordinate Zn(2+). Mg(2+)-binding residues include D460, D462, and D464. Positions 814, 888, 895, and 898 each coordinate Zn(2+).

Belongs to the RNA polymerase beta' chain family. The RNAP catalytic core consists of 2 alpha, 1 beta, 1 beta' and 1 omega subunit. When a sigma factor is associated with the core the holoenzyme is formed, which can initiate transcription. Mg(2+) serves as cofactor. It depends on Zn(2+) as a cofactor.

The catalysed reaction is RNA(n) + a ribonucleoside 5'-triphosphate = RNA(n+1) + diphosphate. DNA-dependent RNA polymerase catalyzes the transcription of DNA into RNA using the four ribonucleoside triphosphates as substrates. The polypeptide is DNA-directed RNA polymerase subunit beta' (Citrobacter koseri (strain ATCC BAA-895 / CDC 4225-83 / SGSC4696)).